The chain runs to 150 residues: Cytochrome c oxidase subunit 5A, mitochondrial (150 aa).

The N-terminal 41 residues, 1-41 (MLGTALRRCAVAAASRAGPRGLQHPAPVPGPTAAIQSIRCY), are a transit peptide targeting the mitochondrion. Positions 2–17 (LGTALRRCAVAAASRA) match the SIFI-degron motif. N6-acetyllysine occurs at positions 87 and 113. Thr141 is subject to Phosphothreonine.

Belongs to the cytochrome c oxidase subunit 5A family. Component of the cytochrome c oxidase (complex IV, CIV), a multisubunit enzyme composed of 14 subunits. The complex is composed of a catalytic core of 3 subunits MT-CO1, MT-CO2 and MT-CO3, encoded in the mitochondrial DNA, and 11 supernumerary subunits COX4I, COX5A, COX5B, COX6A, COX6B, COX6C, COX7A, COX7B, COX7C, COX8 and NDUFA4, which are encoded in the nuclear genome. The complex exists as a monomer or a dimer and forms supercomplexes (SCs) in the inner mitochondrial membrane with NADH-ubiquinone oxidoreductase (complex I, CI) and ubiquinol-cytochrome c oxidoreductase (cytochrome b-c1 complex, complex III, CIII), resulting in different assemblies (supercomplex SCI(1)III(2)IV(1) and megacomplex MCI(2)III(2)IV(2)). Interacts with AFG1L. Interacts with RAB5IF. In terms of processing, in response to mitochondrial stress, the precursor protein is ubiquitinated by the SIFI complex in the cytoplasm before mitochondrial import, leading to its degradation. Within the SIFI complex, UBR4 initiates ubiquitin chain that are further elongated or branched by KCMF1.

The protein resides in the mitochondrion inner membrane. The protein operates within energy metabolism; oxidative phosphorylation. In terms of biological role, component of the cytochrome c oxidase, the last enzyme in the mitochondrial electron transport chain which drives oxidative phosphorylation. The respiratory chain contains 3 multisubunit complexes succinate dehydrogenase (complex II, CII), ubiquinol-cytochrome c oxidoreductase (cytochrome b-c1 complex, complex III, CIII) and cytochrome c oxidase (complex IV, CIV), that cooperate to transfer electrons derived from NADH and succinate to molecular oxygen, creating an electrochemical gradient over the inner membrane that drives transmembrane transport and the ATP synthase. Cytochrome c oxidase is the component of the respiratory chain that catalyzes the reduction of oxygen to water. Electrons originating from reduced cytochrome c in the intermembrane space (IMS) are transferred via the dinuclear copper A center (CU(A)) of subunit 2 and heme A of subunit 1 to the active site in subunit 1, a binuclear center (BNC) formed by heme A3 and copper B (CU(B)). The BNC reduces molecular oxygen to 2 water molecules using 4 electrons from cytochrome c in the IMS and 4 protons from the mitochondrial matrix. The protein is Cytochrome c oxidase subunit 5A, mitochondrial (COX5A) of Nycticebus coucang (Slow loris).